A 382-amino-acid polypeptide reads, in one-letter code: Queuine tRNA-ribosyltransferase (382 aa).

Residue aspartate 96 is the Proton acceptor of the active site. Substrate is bound by residues 96-100 (DSGGF), aspartate 151, glutamine 194, and glycine 221. The interval 252–258 (GVGAPDS) is RNA binding. Aspartate 271 acts as the Nucleophile in catalysis. Positions 276-280 (TRIAR) are RNA binding; important for wobble base 34 recognition. Zn(2+) is bound by residues cysteine 309, cysteine 311, cysteine 314, and histidine 340.

This sequence belongs to the queuine tRNA-ribosyltransferase family. As to quaternary structure, homodimer. Within each dimer, one monomer is responsible for RNA recognition and catalysis, while the other monomer binds to the replacement base PreQ1. Requires Zn(2+) as cofactor.

It carries out the reaction 7-aminomethyl-7-carbaguanine + guanosine(34) in tRNA = 7-aminomethyl-7-carbaguanosine(34) in tRNA + guanine. It participates in tRNA modification; tRNA-queuosine biosynthesis. Catalyzes the base-exchange of a guanine (G) residue with the queuine precursor 7-aminomethyl-7-deazaguanine (PreQ1) at position 34 (anticodon wobble position) in tRNAs with GU(N) anticodons (tRNA-Asp, -Asn, -His and -Tyr). Catalysis occurs through a double-displacement mechanism. The nucleophile active site attacks the C1' of nucleotide 34 to detach the guanine base from the RNA, forming a covalent enzyme-RNA intermediate. The proton acceptor active site deprotonates the incoming PreQ1, allowing a nucleophilic attack on the C1' of the ribose to form the product. After dissociation, two additional enzymatic reactions on the tRNA convert PreQ1 to queuine (Q), resulting in the hypermodified nucleoside queuosine (7-(((4,5-cis-dihydroxy-2-cyclopenten-1-yl)amino)methyl)-7-deazaguanosine). This is Queuine tRNA-ribosyltransferase from Lactococcus lactis subsp. lactis (strain IL1403) (Streptococcus lactis).